The sequence spans 386 residues: tRNA-specific adenosine deaminase subunit tad2 (386 aa).

Residues 212-322 (TQHETYMKLA…GNDRFGGCGS (111 aa)) enclose the CMP/dCMP-type deaminase domain. A Zn(2+)-binding site is contributed by His263. Glu265 (proton donor) is an active-site residue. 2 residues coordinate Zn(2+): Cys293 and Cys296.

Belongs to the cytidine and deoxycytidylate deaminase family. ADAT2 subfamily. As to quaternary structure, heterodimer with Tad3. The cofactor is Zn(2+).

It carries out the reaction adenosine(34) in tRNA + H2O + H(+) = inosine(34) in tRNA + NH4(+). Its function is as follows. Structural subunit of tRNA-specific adenosine deaminase, which deaminates adenosine-34 (the first, also called wobble position of the anticodon) to inosine in many tRNAs. Inosine-34 allows the decoding of 3 different nucleotides at the third position of mRNA codons, as inosine is able to pair with U, C, and A. The wobble inosine tRNA modification is essential for cell cycle progression in the G1/S and G2/M transitions in fission yeast. In Schizosaccharomyces pombe (strain 972 / ATCC 24843) (Fission yeast), this protein is tRNA-specific adenosine deaminase subunit tad2 (tad2).